Reading from the N-terminus, the 67-residue chain is Alpha-toxin Tf3 (67 aa).

The region spanning 2 to 63 (KDGYPVEGDN…EPTKTNGRCK (62 aa)) is the LCN-type CS-alpha/beta domain. 4 disulfides stabilise this stretch: Cys-12–Cys-62, Cys-16–Cys-38, Cys-24–Cys-45, and Cys-28–Cys-47. Pro-64 is subject to Proline amide.

Belongs to the long (4 C-C) scorpion toxin superfamily. Sodium channel inhibitor family. Alpha subfamily. In terms of tissue distribution, expressed by the venom gland.

The protein resides in the secreted. Functionally, alpha toxins bind voltage-independently at site-3 of sodium channels (Nav) and inhibit the inactivation of the activated channels, thereby blocking neuronal transmission. The sequence is that of Alpha-toxin Tf3 from Tityus fasciolatus (Central Brazilian scorpion).